The sequence spans 458 residues: ATP synthase subunit beta (458 aa).

ATP is bound at residue 148 to 155 (GGAGVGKT).

Belongs to the ATPase alpha/beta chains family. In terms of assembly, F-type ATPases have 2 components, CF(1) - the catalytic core - and CF(0) - the membrane proton channel. CF(1) has five subunits: alpha(3), beta(3), gamma(1), delta(1), epsilon(1). CF(0) has three main subunits: a(1), b(2) and c(9-12). The alpha and beta chains form an alternating ring which encloses part of the gamma chain. CF(1) is attached to CF(0) by a central stalk formed by the gamma and epsilon chains, while a peripheral stalk is formed by the delta and b chains.

It localises to the cell inner membrane. The enzyme catalyses ATP + H2O + 4 H(+)(in) = ADP + phosphate + 5 H(+)(out). In terms of biological role, produces ATP from ADP in the presence of a proton gradient across the membrane. The catalytic sites are hosted primarily by the beta subunits. The protein is ATP synthase subunit beta of Francisella tularensis subsp. mediasiatica (strain FSC147).